Reading from the N-terminus, the 745-residue chain is Probable GMP synthase [glutamine-hydrolyzing] (745 aa).

Residues 1 to 37 are disordered; sequence MKRSSSMLDINEDSQHSTNKAPPPKKAPEDRFDSANM. The Glutamine amidotransferase type-1 domain occupies 60-252; it reads RIAILDFGAQ…LFKVVGCCGN (193 aa). The active-site For GATase activity is the Cys138. Residues His226 and Glu228 contribute to the active site. Residues 253 to 461 form the GMPS ATP-PPase domain; the sequence is FTIQNREQSC…LGLPESIVQR (209 aa). Position 280 to 286 (280 to 286) interacts with ATP; the sequence is SGGVDSA. Substrate is bound by residues Arg363, Asp563, Gln662, Lys737, and Glu743.

In terms of assembly, homodimer.

It carries out the reaction XMP + L-glutamine + ATP + H2O = GMP + L-glutamate + AMP + diphosphate + 2 H(+). It functions in the pathway purine metabolism; GMP biosynthesis; GMP from XMP (L-Gln route): step 1/1. This chain is Probable GMP synthase [glutamine-hydrolyzing] (gmps-1), found in Caenorhabditis elegans.